Reading from the N-terminus, the 524-residue chain is Lysine--tRNA ligase (524 aa).

Mg(2+) contacts are provided by glutamate 431 and glutamate 438.

It belongs to the class-II aminoacyl-tRNA synthetase family. In terms of assembly, homodimer. It depends on Mg(2+) as a cofactor.

The protein localises to the cytoplasm. The catalysed reaction is tRNA(Lys) + L-lysine + ATP = L-lysyl-tRNA(Lys) + AMP + diphosphate. This is Lysine--tRNA ligase (lysS) from Chlamydia muridarum (strain MoPn / Nigg).